The following is a 547-amino-acid chain: MQNINPTQTFAWNALEQHKAENLTIPQLFNEDPKRFDKYSLRFEDQILVDFSKNAINQHTLALLRQLADECQVKSATYAMFNGEKINRTENRAVLHTALRNRSNTPVEVDGKNVMLEVNAVLAKMKGFCERVISGVSKGYTGKAITDVVNIGIGGSDLGPYMVTEALRPYKNHLTMHFVSNVDGTHIAETLAKINPETTLFLVASKTFTTQETMTNALSARQWLLDTAKDESAVAKHFVALSTNAKEVAKFGIDTENMFEFWDWVGGRYSLWSAIGLSIALSIGFEHFEQLLDGAHAMDKHFLNAPAEQNIPLTLALIGIWNNNFLGAESEAILPYDQYLHRFAAYFQQGNMESNGKYVGRDGKFVNYQTGPIIWGEPGTNGQHAFYQLIHQGTKLIPCDFIAPAQTHNPIGDHHPKLLSNFFAQTEALAFGKSKEVVEQEFLQAGTSLEEVVEIVPFKVFTGNKPTNSILVQKITPFTLGALIAMYEHKIFVQGVIFNIYSFDQWGVELGKQLANRILPELENNETITSHDSSTNGLINQFKLWKQ.

The Proton donor role is filled by E353. Active-site residues include H384 and K512.

It belongs to the GPI family.

It is found in the cytoplasm. It carries out the reaction alpha-D-glucose 6-phosphate = beta-D-fructose 6-phosphate. The protein operates within carbohydrate biosynthesis; gluconeogenesis. Its pathway is carbohydrate degradation; glycolysis; D-glyceraldehyde 3-phosphate and glycerone phosphate from D-glucose: step 2/4. Functionally, catalyzes the reversible isomerization of glucose-6-phosphate to fructose-6-phosphate. The sequence is that of Glucose-6-phosphate isomerase from Glaesserella parasuis serovar 5 (strain SH0165) (Haemophilus parasuis).